The chain runs to 304 residues: Glutaminase (304 aa).

The substrate site is built by Ser63, Asn114, Glu158, Asn165, Tyr189, Tyr240, and Val258.

It belongs to the glutaminase family. As to quaternary structure, homotetramer.

It carries out the reaction L-glutamine + H2O = L-glutamate + NH4(+). This chain is Glutaminase, found in Shewanella loihica (strain ATCC BAA-1088 / PV-4).